The primary structure comprises 1214 residues: Zinc finger E-box-binding homeobox 2 (1214 aa).

A disordered region spans residues 1-101 (MKQPIMADGP…GVEHPWHNNE (101 aa)). Residues 12-24 (CKRRKQANPRRKN) are compositionally biased toward basic residues. Residues 57–74 (DQETSPASVPNHESSPHV) are compositionally biased toward polar residues. Positions 89 to 98 (REGGVEHPWH) are enriched in basic and acidic residues. Residue Ser-142 is modified to Phosphoserine. C2H2-type zinc fingers lie at residues 211–234 (LTCP…KYRH), 241–263 (FSCP…MVTH), and 282–304 (FKCT…LRIH). The C2H2-type 4; atypical zinc-finger motif lies at 310-334 (YECPNCKKRFSHSGSYSSHISSKKC). Ser-356, Ser-360, and Ser-364 each carry phosphoserine. At Lys-377 the chain carries N6-acetyllysine. A Glycyl lysine isopeptide (Lys-Gly) (interchain with G-Cter in SUMO); alternate cross-link involves residue Lys-391. Lys-391 is covalently cross-linked (Glycyl lysine isopeptide (Lys-Gly) (interchain with G-Cter in SUMO2); alternate). Residues 437–487 (QHLGVGMEAPLLGFPTMNSNLSEVQKVLQIVDNTVSRQKMDCKAEEISKLK) form an SMAD-MH2 binding domain region. Residues Lys-479 and Lys-555 each participate in a glycyl lysine isopeptide (Lys-Gly) (interchain with G-Cter in SUMO2) cross-link. The C2H2-type 5; atypical zinc finger occupies 581-605 (FSCQFCKESFPGPIPLHQHERYLCK). Glycyl lysine isopeptide (Lys-Gly) (interchain with G-Cter in SUMO2) cross-links involve residues Lys-611 and Lys-632. The segment at residues 644–703 (GMTSPINPYKDHMSVLKAYYAMNMEPNSDELLKISIAVGLPQEFVKEWFEQRKVYQYSNS) is a DNA-binding region (homeobox; atypical). Ser-647 is subject to Phosphoserine. A compositionally biased stretch (low complexity) spans 702-715 (NSRSPSLERSSKPL). Disordered regions lie at residues 702–740 (NSRS…DSIT), 771–810 (PVEK…SSEE), and 832–857 (ATKN…ENSD). Residue Lys-713 forms a Glycyl lysine isopeptide (Lys-Gly) (interchain with G-Cter in SUMO2) linkage. Residues Ser-731 and Ser-780 each carry the phosphoserine modification. Low complexity-rich tracts occupy residues 780-808 (SNTP…SFSS) and 840-854 (SSIS…SSSE). Position 782 is a phosphothreonine (Thr-782). Phosphoserine is present on Ser-784. Lys-866 is covalently cross-linked (Glycyl lysine isopeptide (Lys-Gly) (interchain with G-Cter in SUMO); alternate). Lys-866 is covalently cross-linked (Glycyl lysine isopeptide (Lys-Gly) (interchain with G-Cter in SUMO2); alternate). 2 consecutive C2H2-type zinc fingers follow at residues 999 to 1021 (YACD…KYEH) and 1027 to 1049 (HQCQ…SRLH). The C2H2-type 8; atypical zinc finger occupies 1055–1076 (YQCDKCGKRFSHSGSYSQHMNH). The interval 1117 to 1214 (TPQGYSDSEE…HEEDNMEDGM (98 aa)) is disordered. Phosphoserine is present on residues Ser-1122 and Ser-1124. Residues 1127-1155 (RESMPRDGESEKEHEKEGEDGYGKLGRQD) show a composition bias toward basic and acidic residues. Residues 1156-1167 (GDEEFEEEEEES) are compositionally biased toward acidic residues. Basic and acidic residues-rich tracts occupy residues 1168–1179 (ENKSMDTDPETI) and 1186–1205 (GDHS…KSDH). Ser-1203 carries the phosphoserine modification.

The protein belongs to the delta-EF1/ZFH-1 C2H2-type zinc-finger family. Binds activated SMAD1, activated SMAD2 and activated SMAD3; binding with SMAD4 is not detected. Interacts with CBX4 and CTBP1. Post-translationally, sumoylation on Lys-391 and Lys-866 is promoted by the E3 SUMO-protein ligase CBX4, and impairs interaction with CTBP1 and transcription repression activity.

The protein resides in the nucleus. It is found in the chromosome. Its function is as follows. Transcriptional inhibitor that binds to DNA sequence 5'-CACCT-3' in different promoters. Represses transcription of E-cadherin. Represses expression of MEOX2. This chain is Zinc finger E-box-binding homeobox 2, found in Homo sapiens (Human).